A 640-amino-acid chain; its full sequence is MGKIIGIDLGTTNSCVAVMQGTQPTVIENSEGNRTTPSMVAFTKSGDRLVGQAAKRQAITNPKNTIYSIKRFVGRKFDEVPNEKKLAPYDIVNEGGEARVKINDKAYSPQEISAMILQKMKQTAEDFLGEKVSEAVITVPAYFNDAQRQATKDAGRIAGLDVKRIINEPTAAALAYGLDKKQSSEKVAVFDLGGGTFDISILELGDGVFEVKSTDGDTHLGGDDFDQKIINFLADEFKKQEGIDLRNDAIALQRLKEAAEKAKVELSSRTDTEINLPFITATQEGPKHLVINLTRAKFEAMCSDLFDKILEPCHRAVKNSSVEIKDIDEVVLVGGSTRIPKVQALVKEFFGREPNKSVNPDEVVAVGAAIQGGVLKGDVTDVLLLDVSPLSLGIETLGGVMTRLIEANTTIPTRKQEVFSTAGDNQTSVEVHVLQGERPMASDNKTLGRFHLGDIPPAPRGLPQIEVTFDIDSNGILSVSAKDKATGKEQSIKIEASGKLSDAEIEKMKRDAKEHAAEDMKKKEEIDSKNAADGLIFSTEKQLAELGDKIPSDKRPALEGALEKLKDATKNGTTESIKNAMDELSKVWNDVSSNLYQAPGAETNASEPTQNTDGSGHTKKSGNDGEVENAEFEVIDGNGK.

Thr-196 carries the phosphothreonine; by autocatalysis modification. A compositionally biased stretch (basic and acidic residues) spans 547 to 569 (GDKIPSDKRPALEGALEKLKDAT). Disordered regions lie at residues 547–575 (GDKI…GTTE) and 595–640 (LYQA…GNGK). Residues 603-615 (TNASEPTQNTDGS) are compositionally biased toward polar residues. Positions 625–634 (GEVENAEFEV) are enriched in acidic residues.

It belongs to the heat shock protein 70 family.

Its function is as follows. Acts as a chaperone. The polypeptide is Chaperone protein DnaK (Chlorobium phaeobacteroides (strain DSM 266 / SMG 266 / 2430)).